Consider the following 68-residue polypeptide: Molybdenum-pterin-binding protein 2 (68 aa).

The 67-residue stretch at 2 to 68 (SISARNQLKG…VKSTDVMILA (67 aa)) folds into the Mop domain.

In terms of biological role, binds one mole of molybdenum per mole of protein and contains a pterin. In Clostridium pasteurianum, this protein is Molybdenum-pterin-binding protein 2 (mopII).